Consider the following 161-residue polypeptide: Regulator of ribonuclease activity A (161 aa).

Belongs to the RraA family. In terms of assembly, homotrimer. Binds to both RNA-binding sites in the C-terminal region of Rne and to RhlB.

Its subcellular location is the cytoplasm. Its function is as follows. Globally modulates RNA abundance by binding to RNase E (Rne) and regulating its endonucleolytic activity. Can modulate Rne action in a substrate-dependent manner by altering the composition of the degradosome. Modulates RNA-binding and helicase activities of the degradosome. The polypeptide is Regulator of ribonuclease activity A (Shewanella denitrificans (strain OS217 / ATCC BAA-1090 / DSM 15013)).